We begin with the raw amino-acid sequence, 553 residues long: Probable inactive serine/threonine-protein kinase samkD (553 aa).

An SAM domain is found at 24–90; that stretch reads WDNETVCKWL…FEYQILKNCY (67 aa). A Protein kinase domain is found at 134–393; the sequence is YQYIETISKN…SKELLKSFWF (260 aa). ATP-binding positions include 140-148 and Lys165; that span reads ISKNKFCEI.

The protein belongs to the protein kinase superfamily. Ser/Thr protein kinase family.

The protein is Probable inactive serine/threonine-protein kinase samkD (samkD) of Dictyostelium discoideum (Social amoeba).